The sequence spans 144 residues: Large ribosomal subunit protein uL16 (144 aa).

This sequence belongs to the universal ribosomal protein uL16 family. As to quaternary structure, part of the 50S ribosomal subunit.

Binds 23S rRNA and is also seen to make contacts with the A and possibly P site tRNAs. This Bacillus cytotoxicus (strain DSM 22905 / CIP 110041 / 391-98 / NVH 391-98) protein is Large ribosomal subunit protein uL16.